Here is a 214-residue protein sequence, read N- to C-terminus: Outer-membrane lipoprotein LolB (214 aa).

The signal sequence occupies residues 1–25 (MNNLKRFTESIFSCIALSTLLFLGG). Cys26 carries the N-palmitoyl cysteine lipid modification. Cys26 carries S-diacylglycerol cysteine lipidation.

It belongs to the LolB family. As to quaternary structure, monomer.

Its subcellular location is the cell outer membrane. Its function is as follows. Plays a critical role in the incorporation of lipoproteins in the outer membrane after they are released by the LolA protein. This is Outer-membrane lipoprotein LolB from Shewanella putrefaciens (strain CN-32 / ATCC BAA-453).